The following is a 224-amino-acid chain: Phosphoribosylformylglycinamidine synthase subunit PurQ (224 aa).

Positions R4–S224 constitute a Glutamine amidotransferase type-1 domain. The active-site Nucleophile is C87. Active-site residues include H195 and E197.

As to quaternary structure, part of the FGAM synthase complex composed of 1 PurL, 1 PurQ and 2 PurS subunits.

The protein localises to the cytoplasm. The catalysed reaction is N(2)-formyl-N(1)-(5-phospho-beta-D-ribosyl)glycinamide + L-glutamine + ATP + H2O = 2-formamido-N(1)-(5-O-phospho-beta-D-ribosyl)acetamidine + L-glutamate + ADP + phosphate + H(+). It catalyses the reaction L-glutamine + H2O = L-glutamate + NH4(+). It participates in purine metabolism; IMP biosynthesis via de novo pathway; 5-amino-1-(5-phospho-D-ribosyl)imidazole from N(2)-formyl-N(1)-(5-phospho-D-ribosyl)glycinamide: step 1/2. In terms of biological role, part of the phosphoribosylformylglycinamidine synthase complex involved in the purines biosynthetic pathway. Catalyzes the ATP-dependent conversion of formylglycinamide ribonucleotide (FGAR) and glutamine to yield formylglycinamidine ribonucleotide (FGAM) and glutamate. The FGAM synthase complex is composed of three subunits. PurQ produces an ammonia molecule by converting glutamine to glutamate. PurL transfers the ammonia molecule to FGAR to form FGAM in an ATP-dependent manner. PurS interacts with PurQ and PurL and is thought to assist in the transfer of the ammonia molecule from PurQ to PurL. This Mycobacterium leprae (strain TN) protein is Phosphoribosylformylglycinamidine synthase subunit PurQ.